The chain runs to 220 residues: Superoxide dismutase [Fe] (220 aa).

Residues His-26, His-73, Asp-164, and His-168 each contribute to the Fe cation site.

Belongs to the iron/manganese superoxide dismutase family. As to quaternary structure, homodimer. It depends on Fe cation as a cofactor.

The enzyme catalyses 2 superoxide + 2 H(+) = H2O2 + O2. In terms of biological role, destroys superoxide anion radicals which are normally produced within the cells and which are toxic to biological systems. The chain is Superoxide dismutase [Fe] (sodB) from Campylobacter coli.